Reading from the N-terminus, the 93-residue chain is YcgL domain-containing protein VFMJ11_1829 (93 aa).

Positions 1 to 84 constitute a YcgL domain; sequence MFCSIYKSTK…PPENLLEKYK (84 aa).

The polypeptide is YcgL domain-containing protein VFMJ11_1829 (Aliivibrio fischeri (strain MJ11) (Vibrio fischeri)).